Here is a 513-residue protein sequence, read N- to C-terminus: Histidine ammonia-lyase (513 aa).

The 5-imidazolinone (Ala-Gly) cross-link spans 146 to 148 (ASG). At Ser147 the chain carries 2,3-didehydroalanine (Ser).

The protein belongs to the PAL/histidase family. Contains an active site 4-methylidene-imidazol-5-one (MIO), which is formed autocatalytically by cyclization and dehydration of residues Ala-Ser-Gly.

The protein resides in the cytoplasm. The enzyme catalyses L-histidine = trans-urocanate + NH4(+). The protein operates within amino-acid degradation; L-histidine degradation into L-glutamate; N-formimidoyl-L-glutamate from L-histidine: step 1/3. The chain is Histidine ammonia-lyase from Caulobacter vibrioides (strain NA1000 / CB15N) (Caulobacter crescentus).